Reading from the N-terminus, the 208-residue chain is Protein late bloomer (208 aa).

The next 4 membrane-spanning stretches (helical) occupy residues 10-30 (IASI…IGWI), 41-61 (FVIA…LGIF), 67-87 (SVVL…LQIV), and 174-194 (FIIV…LAVF).

Belongs to the tetraspanin (TM4SF) family. Transiently expressed on motor axons, growth cones and terminal arbors.

The protein localises to the membrane. It localises to the synapse. Facilitates synapse formation. The polypeptide is Protein late bloomer (lbm) (Drosophila melanogaster (Fruit fly)).